A 222-amino-acid polypeptide reads, in one-letter code: RNA-binding protein KhpB (222 aa).

Residues 2–51 are jag_N domain; that stretch reads DMVTVTAKTVEEAVTKALIELQTTSDKLTYEIVEKGSAGFLGIGSKPAII. The KH domain maps to 54–133; that stretch reads KRKETLQDKA…KSSSDYIRVK (80 aa). An R3H domain is found at 138–204; sequence NYRERRKETL…EEPFRHVIIS (67 aa).

The protein belongs to the KhpB RNA-binding protein family. Forms a complex with KhpA. Homodimer or homotrimer.

Its subcellular location is the cytoplasm. In terms of biological role, a probable RNA chaperone. Forms a complex with KhpA which binds to cellular RNA and controls its expression. Plays a role in peptidoglycan (PG) homeostasis and cell length regulation. This Clostridium symbiosum (Bacteroides symbiosus) protein is RNA-binding protein KhpB.